The sequence spans 385 residues: Alkanesulfonate monooxygenase 2 (385 aa).

Belongs to the SsuD family.

The enzyme catalyses an alkanesulfonate + FMNH2 + O2 = an aldehyde + FMN + sulfite + H2O + 2 H(+). Functionally, catalyzes the desulfonation of aliphatic sulfonates. The polypeptide is Alkanesulfonate monooxygenase 2 (ssuD2) (Mesorhizobium japonicum (strain LMG 29417 / CECT 9101 / MAFF 303099) (Mesorhizobium loti (strain MAFF 303099))).